The following is a 612-amino-acid chain: Adherence factor (612 aa).

Composition is skewed to low complexity over residues 1-18 (MSSF…NLSS), 47-68 (SSMM…QQQQ), 94-106 (LQTQ…SATT), 115-141 (YNQQ…NNMQ), 182-203 (QSAQ…QPRS), and 218-228 (SRQVSGSGRST). 7 disordered regions span residues 1–20 (MSSF…SSFQ), 46–68 (ASSM…QQQQ), 94–143 (LQTQ…MQFF), 179–273 (PQLQ…NNNK), 443–480 (KEKK…NTNN), 497–527 (SQLM…LSNN), and 546–612 (SQEQ…KQFY). Polar residues predominate over residues 230–240 (AKKQSAITSGS). Positions 254–272 (TSVANSTSTTTMTTTNNNN) are enriched in low complexity. The segment covering 443-457 (KEKKLTEKTIEQREQ) has biased composition (basic and acidic residues). Polar residues-rich tracts occupy residues 465 to 480 (ANHS…NTNN) and 497 to 512 (SQLM…ATKI). Positions 555 to 571 (NQHHHNHQQHPLIHHHQ) are enriched in basic residues. Positions 585–606 (PSTIPTSSLSIQQQQQQQQQQL) are enriched in low complexity.

Functionally, surface antigen mediating adhesion and aggregation in S.cerevisiae. The polypeptide is Adherence factor (ADF1) (Candida albicans (strain SC5314 / ATCC MYA-2876) (Yeast)).